Reading from the N-terminus, the 227-residue chain is Transcriptional regulatory protein TdiR (227 aa).

The Response regulatory domain occupies Thr11–Leu125. Residue Asp60 is modified to 4-aspartylphosphate. One can recognise an HTH luxR-type domain in the interval His141 to Ser206. A DNA-binding region (H-T-H motif) is located at residues Ser165 to Gly184.

In terms of processing, phosphorylated by TdiS.

In terms of biological role, member of the two-component regulatory system TdiR/TdiS, which probably regulates transcription of toluene catabolic genes (bss operon). Binds to DNA. This Thauera aromatica protein is Transcriptional regulatory protein TdiR (tdiR).